Reading from the N-terminus, the 235-residue chain is Protein LIFEGUARD 1 (235 aa).

Transmembrane regions (helical) follow at residues 33-53 (YSIL…VYFV), 67-87 (LAVF…LLAF), 95-115 (CIVL…CCSL), 120-140 (IVLE…IYTF), 149-169 (FSFL…FTLL), 178-198 (LSSM…IIFD), and 212-232 (ITAA…LLGI).

It belongs to the BI1 family. As to expression, expressed at very low in leaves.

The protein resides in the membrane. Functionally, (Microbial infection) Facilitates the development of the powdery mildew fungus E.cruciferarum. In terms of biological role, (Microbial infection) May prevent cell death upon A.alternata f.sp. lycopersici (AAL) toxin treatment. In Arabidopsis thaliana (Mouse-ear cress), this protein is Protein LIFEGUARD 1.